The chain runs to 300 residues: MQSTLSQSPGSRFSQYMALTKPRVTQLAVFCAVIGMFLATPGMVPWHVLIGGTVGIWLLAGAAFAINCLVEQKIDAMMRRTAWRPSARGEITTPQILIFSAVLGSVGAWTLYTFTNPLTMWLTIATFVGYAVIYTLLLKPMTPQNIVIGGASGAMPPALGWAAVTGAVPGDAWILVLIIFVWTPPHFWVLALYRRKDYENAGLPMLPVTHGEKFTRLHILLYTVILFAVTLMPFISGMSGAVYLTSAVLLGAVFLAYAWKIHRDYSDELARKAFRYSIVYLSLLFAALLVDHYARPLLGV.

9 helical membrane passes run 24–44, 46–66, 94–114, 118–138, 146–166, 172–192, 217–237, 239–259, and 278–298; these read VTQL…PGMV, WHVL…AFAI, PQIL…LYTF, LTMW…TLLL, IVIG…AVTG, AWIL…VLAL, LHIL…FISG, SGAV…AYAW, and IVYL…RPLL.

This sequence belongs to the UbiA prenyltransferase family. Protoheme IX farnesyltransferase subfamily.

It is found in the cell inner membrane. It carries out the reaction heme b + (2E,6E)-farnesyl diphosphate + H2O = Fe(II)-heme o + diphosphate. The protein operates within porphyrin-containing compound metabolism; heme O biosynthesis; heme O from protoheme: step 1/1. In terms of biological role, converts heme B (protoheme IX) to heme O by substitution of the vinyl group on carbon 2 of heme B porphyrin ring with a hydroxyethyl farnesyl side group. This Burkholderia lata (strain ATCC 17760 / DSM 23089 / LMG 22485 / NCIMB 9086 / R18194 / 383) protein is Protoheme IX farnesyltransferase.